The sequence spans 138 residues: Large ribosomal subunit protein bL19 (138 aa).

Belongs to the bacterial ribosomal protein bL19 family.

Functionally, this protein is located at the 30S-50S ribosomal subunit interface and may play a role in the structure and function of the aminoacyl-tRNA binding site. The protein is Large ribosomal subunit protein bL19 of Rickettsia rickettsii (strain Iowa).